The following is a 140-amino-acid chain: Large ribosomal subunit protein bL17 (140 aa).

It belongs to the bacterial ribosomal protein bL17 family. In terms of assembly, part of the 50S ribosomal subunit. Contacts protein L32.

The sequence is that of Large ribosomal subunit protein bL17 from Rhizobium johnstonii (strain DSM 114642 / LMG 32736 / 3841) (Rhizobium leguminosarum bv. viciae).